Here is an 855-residue protein sequence, read N- to C-terminus: Photoactivated adenylate cyclase subunit beta-like protein 1224-5/9F (855 aa).

The BLUF 1 domain occupies 56-149; the sequence is LRRLMYLSKG…GRMSGVWHMK (94 aa). Residues 420–444 form a disordered region; that stretch reads RPPIFDDTPKCNPRPRTPGCEGRQR. One can recognise a BLUF 2 domain in the interval 471-563; it reads VPTLTYISHA…RVYPSEWTLT (93 aa). Residues 813-827 are compositionally biased toward basic and acidic residues; the sequence is RSGEKPLTEPEEAKL. Residues 813 to 855 are disordered; the sequence is RSGEKPLTEPEEAKLDFSPGRVRHGDSGRRSNSAQGKLSIQVR. Over residues 842–855 the composition is skewed to polar residues; it reads RSNSAQGKLSIQVR.

In terms of assembly, heterotetramer of two alpha and two beta subunits.

The protein resides in the cell projection. Its subcellular location is the cilium. The protein localises to the flagellum. The protein is Photoactivated adenylate cyclase subunit beta-like protein 1224-5/9F of Euglena gracilis.